Consider the following 603-residue polypeptide: Serine/threonine-protein kinase HAL4/SAT4 (603 aa).

Composition is skewed to polar residues over residues 1–15, 30–60, and 68–85; these read MTGMNDNNAAIPQQT, RSGSRSSRQGKASSNIQPPSNINTNVPSASK, and TPTTATPRVVSNPSNTAG. 3 disordered regions span residues 1–86, 150–171, and 267–301; these read MTGM…TAGV, LSPKFSHHSNSNTAITPAPTPT, and DKYPEGAPTSGALNCPERDIYRSDQKDSKNNTHNI. Over residues 159 to 171 the composition is skewed to low complexity; that stretch reads NSNTAITPAPTPT. Basic and acidic residues predominate over residues 282-296; sequence PERDIYRSDQKDSKN. Residues 316-590 form the Protein kinase domain; that stretch reads GRCQEVLGKG…GKQILNSEWG (275 aa). ATP is bound by residues 322 to 330 and K353; that span reads LGKGAFGVV. Catalysis depends on D449, which acts as the Proton acceptor.

It belongs to the protein kinase superfamily. Ser/Thr protein kinase family.

The catalysed reaction is L-seryl-[protein] + ATP = O-phospho-L-seryl-[protein] + ADP + H(+). It carries out the reaction L-threonyl-[protein] + ATP = O-phospho-L-threonyl-[protein] + ADP + H(+). Functionally, promotes K(+) uptake, by the potassium transporter TRK1-TRK2, which leads to the subsequent cellular resistance to toxic cations such as Na(+), Li(+) and Ca(2+). In Saccharomyces cerevisiae (strain ATCC 204508 / S288c) (Baker's yeast), this protein is Serine/threonine-protein kinase HAL4/SAT4 (SAT4).